A 281-amino-acid chain; its full sequence is Probable short-chain type dehydrogenase/reductase blr2146 (281 aa).

Position 10 to 34 (10 to 34) interacts with NAD(+); the sequence is VVTGAGAGIGKACALAIAREGGRVV. Residue Ser-146 coordinates substrate. Residue Tyr-159 is the Proton acceptor of the active site. The disordered stretch occupies residues 261 to 281; it reads GNSRAARPAGETAEADAAPRC.

It belongs to the short-chain dehydrogenases/reductases (SDR) family.

This is Probable short-chain type dehydrogenase/reductase blr2146 from Bradyrhizobium diazoefficiens (strain JCM 10833 / BCRC 13528 / IAM 13628 / NBRC 14792 / USDA 110).